The chain runs to 187 residues: UPF0232 protein Mb0004 (187 aa).

2 stretches are compositionally biased toward basic and acidic residues: residues 1-17 and 35-45; these read MTGSVDRPDQNRGERLM and AARARGQDAGR. 3 disordered regions span residues 1–23, 35–75, and 168–187; these read MTGSVDRPDQNRGERLMKSPGLD, AARA…DPQP, and PSWRKGPRHIAGRGPRDTYG.

Belongs to the UPF0232 family.

The sequence is that of UPF0232 protein Mb0004 from Mycobacterium bovis (strain ATCC BAA-935 / AF2122/97).